The following is an 838-amino-acid chain: Collagen alpha-2(I) chain (838 aa).

Residues 1–838 (GPMGIMGPRG…GTVGPAGIRS (838 aa)) form a disordered region. The span at 11-38 (FQGPAGEPGEPGQTGPAGARGPAGPPGK) shows a compositional bias: low complexity. Basic and acidic residues predominate over residues 39–53 (AGEDGHPGKPGRPGE). Low complexity-rich tracts occupy residues 101-122 (SRGS…SAGP), 137-147 (PVGNTGPAGPA), 215-236 (NGES…RGIP), and 329-344 (AGNR…NGAQ). Residues 351-360 (GVQGGKGEQG) show a composition bias toward gly residues. 2 stretches are compositionally biased toward low complexity: residues 407 to 424 (PGES…SRGP) and 436 to 446 (EPGVVGAPGTA). Gly residues predominate over residues 447 to 456 (GPAGSGGIPG). 3 stretches are compositionally biased toward low complexity: residues 479 to 523 (VGTT…PRGT), 530 to 550 (VGPA…QPGA), and 568 to 581 (SAGP…PGPA). Positions 582 to 591 (GSRGDGGPPG) are enriched in gly residues. The segment covering 593–602 (TGFPGAAGRT) has biased composition (low complexity). Over residues 633-642 (GETGAGGPPG) the composition is skewed to gly residues. The segment covering 649–689 (TAGPQGIIGAPGIIGIPGSRGIPGVSGSVGEPGPIGISGPP) has biased composition (low complexity). Positions 693 to 702 (GPSGGVGNPG) are enriched in gly residues. Composition is skewed to low complexity over residues 703–718 (VNGA…NPGN), 736–758 (YAGN…VGPA), and 766–781 (EPGP…AIGP).

The protein belongs to the fibrillar collagen family. As to quaternary structure, trimers of one alpha 2(I) and two alpha 1(I) chains. Interacts (via C-terminus) with TMEM131 (via PapD-L domain); the interaction is direct and is involved in assembly and TRAPPIII ER-to-Golgi transport complex-dependent secretion of collagen. Post-translationally, prolines at the third position of the tripeptide repeating unit (G-X-Y) are hydroxylated in some or all of the chains. Forms the fibrils of tendon, ligaments and bones. In bones, the fibrils are mineralized with calcium hydroxyapatite.

The protein resides in the secreted. Its subcellular location is the extracellular space. It localises to the extracellular matrix. Its function is as follows. Type I collagen is a member of group I collagen (fibrillar forming collagen). The sequence is that of Collagen alpha-2(I) chain from Cyclopes didactylus (Silky anteater).